The chain runs to 510 residues: uncharacterized protein (510 aa).

Belongs to the phage portal family. PBSX subfamily.

This is an uncharacterized protein from Bacillus subtilis (strain 168).